A 250-amino-acid chain; its full sequence is Cell division protein ZapD (250 aa).

This sequence belongs to the ZapD family. Interacts with FtsZ.

It localises to the cytoplasm. Its function is as follows. Cell division factor that enhances FtsZ-ring assembly. Directly interacts with FtsZ and promotes bundling of FtsZ protofilaments, with a reduction in FtsZ GTPase activity. The sequence is that of Cell division protein ZapD from Pectobacterium carotovorum subsp. carotovorum (strain PC1).